A 209-amino-acid chain; its full sequence is High frequency lysogenization protein HflD homolog (209 aa).

Positions 79 to 121 (QGLNAELTRYTLSLMVLERKLNSAKGAMDTLGDRIAGLQRQLD) form a coiled coil.

This sequence belongs to the HflD family.

The protein localises to the cytoplasm. It is found in the cell inner membrane. This is High frequency lysogenization protein HflD homolog from Enterobacter sp. (strain 638).